Consider the following 517-residue polypeptide: GMP synthase [glutamine-hydrolyzing] (517 aa).

Residues 9-199 form the Glutamine amidotransferase type-1 domain; sequence RILILDFGSQ…VLNVCGCEGL (191 aa). The Nucleophile role is filled by Cys-86. Catalysis depends on residues His-173 and Glu-175. The GMPS ATP-PPase domain maps to 200–392; it reads WTSASIIEDA…LGLPYNMLYR (193 aa). Residue 227–233 participates in ATP binding; that stretch reads SGGVDSS.

In terms of assembly, homodimer.

It carries out the reaction XMP + L-glutamine + ATP + H2O = GMP + L-glutamate + AMP + diphosphate + 2 H(+). The protein operates within purine metabolism; GMP biosynthesis; GMP from XMP (L-Gln route): step 1/1. In terms of biological role, catalyzes the synthesis of GMP from XMP. This Aliivibrio fischeri (strain ATCC 700601 / ES114) (Vibrio fischeri) protein is GMP synthase [glutamine-hydrolyzing].